A 232-amino-acid chain; its full sequence is Floral homeotic protein APETALA 3 (232 aa).

Residues 3-57 (RGKIQIKRIENQTNRQVTYSKRRNGLFKKAHELTVLCDARVSIIMFSSSNKLHEY) form the MADS-box domain. Residues 75-164 (SDVDVWATQY…KSQQDIQKNL (90 aa)) are a coiled coil. Positions 84–174 (YERMQETKRK…IHELELRAED (91 aa)) constitute a K-box domain.

As to quaternary structure, forms a heterodimer with PISTILLATA, capable of binding to CArG-box sequences. AP3/PI heterodimer binds AP1 or SEP3 to form complexes. Expressed in petals and stamens.

The protein localises to the nucleus. Probable transcription factor involved in the genetic control of flower development. Is required for normal development of petals and stamens in the wild-type flower. Forms a heterodimer with PISTILLATA that is required for autoregulation of both AP3 and PI genes. AP3/PI heterodimer interacts with APETALA1 or SEPALLATA3 to form a ternary complex that could be responsible for the regulation of the genes involved in the flower development. AP3/PI heterodimer activates the expression of NAP. AP3/PI prevents GATA22/GNL and GATA21/GNC expression. The polypeptide is Floral homeotic protein APETALA 3 (AP3) (Arabidopsis thaliana (Mouse-ear cress)).